Reading from the N-terminus, the 396-residue chain is Elongation factor Tu 1 (396 aa).

In terms of domain architecture, tr-type G spans 10-206; sequence KPHVNVGTIG…TLDTYIPEPE (197 aa). The G1 stretch occupies residues 19 to 26; sequence GHVDHGKT. 19-26 is a binding site for GTP; the sequence is GHVDHGKT. Residue Thr-26 participates in Mg(2+) binding. The G2 stretch occupies residues 60-64; sequence GITIN. The G3 stretch occupies residues 81 to 84; the sequence is DCPG. GTP contacts are provided by residues 81–85 and 136–139; these read DCPGH and NKCD. Residues 136–139 are G4; the sequence is NKCD. The interval 174-176 is G5; it reads SAL.

This sequence belongs to the TRAFAC class translation factor GTPase superfamily. Classic translation factor GTPase family. EF-Tu/EF-1A subfamily. Monomer.

The protein resides in the cytoplasm. The enzyme catalyses GTP + H2O = GDP + phosphate + H(+). Its function is as follows. GTP hydrolase that promotes the GTP-dependent binding of aminoacyl-tRNA to the A-site of ribosomes during protein biosynthesis. This is Elongation factor Tu 1 from Psychrobacter sp. (strain PRwf-1).